The primary structure comprises 202 residues: LexA repressor (202 aa).

A DNA-binding region (H-T-H motif) is located at residues R28 to K48. Active-site for autocatalytic cleavage activity residues include S119 and K156.

It belongs to the peptidase S24 family. In terms of assembly, homodimer.

The catalysed reaction is Hydrolysis of Ala-|-Gly bond in repressor LexA.. In terms of biological role, represses a number of genes involved in the response to DNA damage (SOS response), including recA and lexA. Binds to the 16 bp palindromic sequence 5'-CTGTATATATATACAG-3'. In the presence of single-stranded DNA, RecA interacts with LexA causing an autocatalytic cleavage which disrupts the DNA-binding part of LexA, leading to derepression of the SOS regulon and eventually DNA repair. The protein is LexA repressor of Salmonella agona (strain SL483).